We begin with the raw amino-acid sequence, 330 residues long: Beta-ketoacyl-[acyl-carrier-protein] synthase III (330 aa).

Residues Cys-115 and His-255 contribute to the active site. The segment at 256–260 (QANFR) is ACP-binding. Asn-285 is a catalytic residue.

The protein belongs to the thiolase-like superfamily. FabH family. As to quaternary structure, homodimer.

The protein localises to the cytoplasm. The enzyme catalyses malonyl-[ACP] + acetyl-CoA + H(+) = 3-oxobutanoyl-[ACP] + CO2 + CoA. It functions in the pathway lipid metabolism; fatty acid biosynthesis. Functionally, catalyzes the condensation reaction of fatty acid synthesis by the addition to an acyl acceptor of two carbons from malonyl-ACP. Catalyzes the first condensation reaction which initiates fatty acid synthesis and may therefore play a role in governing the total rate of fatty acid production. Possesses both acetoacetyl-ACP synthase and acetyl transacylase activities. Its substrate specificity determines the biosynthesis of branched-chain and/or straight-chain of fatty acids. The sequence is that of Beta-ketoacyl-[acyl-carrier-protein] synthase III from Helicobacter pylori (strain G27).